The primary structure comprises 260 residues: Phosphatidate cytidylyltransferase (260 aa).

7 consecutive transmembrane segments (helical) span residues 9–29 (IIALIVFLPVLLKGGLILMLF), 46–66 (MIKFLSIPGIISALGILIIML), 70–90 (AGSWVNDLQLKSLIAMSFILL), 102–122 (FMDAAFCLMSIAYVGIGFMYL), 130–150 (LHYILFAFLVVWLTDTGAYIF), 172–192 (FVGGLICSLIVPLVMMIFVDF), and 196–216 (LWLLLIITIILSMFGQLGDLV).

This sequence belongs to the CDS family.

It localises to the cell membrane. The catalysed reaction is a 1,2-diacyl-sn-glycero-3-phosphate + CTP + H(+) = a CDP-1,2-diacyl-sn-glycerol + diphosphate. Its pathway is phospholipid metabolism; CDP-diacylglycerol biosynthesis; CDP-diacylglycerol from sn-glycerol 3-phosphate: step 3/3. In Staphylococcus saprophyticus subsp. saprophyticus (strain ATCC 15305 / DSM 20229 / NCIMB 8711 / NCTC 7292 / S-41), this protein is Phosphatidate cytidylyltransferase (cdsA).